The following is a 228-amino-acid chain: Death domain-containing membrane protein NRADD (228 aa).

At 1-52 (MLHNVSKGVVYSDTALKGQDGDREGMWVGAGGALAPNTSSLFPPEPPGASSN) the chain is on the extracellular side. Residues N4 and N37 are each glycosylated (N-linked (GlcNAc...) asparagine). Residues 53 to 73 (IIPVYCALLATVVLGLLAYVA) form a helical; Signal-anchor for type III membrane protein membrane-spanning segment. The Cytoplasmic segment spans residues 74–228 (FKCWRSRKQR…SSPAEGCSVV (155 aa)). A Death domain is found at 143–222 (EEVQRLLILG…DVVQVLSSPA (80 aa)).

In terms of assembly, interacts with NTRK1. Isoform 1 and isoform 2 interact with NGFR. Interacts with SORT1. Isoform 1 is N-glycosylated. Isoform 2 is not N-glycosylated. Detected in embryo, including embryonic brain. Detected at very low levels in adult testis, spleen, thymus and lung.

It localises to the cell membrane. The protein resides in the nucleus. In terms of biological role, modulates NTRK1 signaling. Can activate several intracellular signaling pathways, leading to activation of JUN. Promotes translocation of SORT1 to the cell membrane, and thereby hinders lysosomal degradation of SOTR1 and promotes its interaction with NGFR. Both isoform 1 and isoform 2 promote apoptosis. This Rattus norvegicus (Rat) protein is Death domain-containing membrane protein NRADD (Nradd).